The sequence spans 551 residues: Hydroxylamine reductase (551 aa).

C3, C6, C18, and C25 together coordinate [2Fe-2S] cluster. H249, E273, C317, C405, C433, C459, E493, and K495 together coordinate hybrid [4Fe-2O-2S] cluster. Cysteine persulfide is present on C405.

This sequence belongs to the HCP family. [2Fe-2S] cluster is required as a cofactor. It depends on hybrid [4Fe-2O-2S] cluster as a cofactor.

The protein localises to the cytoplasm. The enzyme catalyses A + NH4(+) + H2O = hydroxylamine + AH2 + H(+). Functionally, catalyzes the reduction of hydroxylamine to form NH(3) and H(2)O. This chain is Hydroxylamine reductase, found in Actinobacillus pleuropneumoniae serotype 7 (strain AP76).